The chain runs to 1323 residues: ABC transporter gloK (1323 aa).

The next 7 helical transmembrane spans lie at 6–26 (AIAS…TLEA), 102–122 (PHAL…AGIL), 138–158 (VAYG…VMST), 217–237 (IWAS…RLGV), 240–260 (VAAV…VFGF), 325–345 (LLVG…VFAF), and 359–379 (PLLA…GQAV). An ABC transmembrane type-1 1 domain is found at 142-380 (LIAAYAIVYI…IFSLLGQAVS (239 aa)). The region spanning 471–697 (IRDCSACWSK…SSYLESLGTR (227 aa)) is the ABC transporter 1 domain. Residue 503–510 (GPIGSGKS) coordinates ATP. 7 consecutive transmembrane segments (helical) span residues 748-768 (GWVT…GLVF), 795-815 (YALW…WLMI), 821-841 (AAIQ…LVYF), 859-879 (LIDM…LSCI), 891-910 (YVAA…QLFY), 976-996 (LNLT…SIAL), and 1006-1026 (IGVA…LVYT). In terms of domain architecture, ABC transmembrane type-1 2 spans 752–1031 (WWVFVLLCSG…TLVYTWTSLE (280 aa)). The ABC transporter 2 domain occupies 1069-1300 (IRFQSVSAAY…PSFFASLLKA (232 aa)). 1103–1110 (GRTGSGKS) provides a ligand contact to ATP.

It belongs to the ABC transporter superfamily. ABCC family. Conjugate transporter (TC 3.A.1.208) subfamily.

The protein localises to the cell membrane. Functionally, 3-isopropylmalate dehydratase large subunit; part of the gene cluster that mediates the biosynthesis of pneumocandins, lipohexapeptides of the echinocandin family that prevent fungal cell wall formation by non-competitive inhibition of beta-1,3-glucan synthase. Possibly secretes antifungal pneumocandins, thus avoiding of intracellular accumulation and ameliorating the toxicity to the producing cells. The chain is ABC transporter gloK from Glarea lozoyensis (strain ATCC 20868 / MF5171).